Consider the following 360-residue polypeptide: MPRITVALIFGGRSTEHEISIISAKSIAANISAERYKVIPLYITHQGTWLCEGIARDILNLDLSALLRNSSPEAAAMALDRMVEEAEQKPFNLDFRAIGIEVAFLTLHGTYGEDGRIQGFLDTCNIPYTGCGVLASALTMDKALTKLCVADAGIAVAPSITLLSAEYHADTEKVHSRIEEKFIYPFFVKPANLGSSIGISKVHHREQLPAALKSACSLDSKIVVEKAITGREIEVAVLGNDEPEVSVCGEIEPGSDFYDYHDKYIHNSAKLFIPARIPDEMQSEVRSIALKAYKALGCRGMSRIDFFVDEKRGTIVLNEVNTIPGFTDISMFPRLMAASGHSFPELAERLLQLALETLRP.

The 207-residue stretch at 146–352 folds into the ATP-grasp domain; that stretch reads KLCVADAGIA…FPELAERLLQ (207 aa). 179 to 234 is an ATP binding site; sequence EEKFIYPFFVKPANLGSSIGISKVHHREQLPAALKSACSLDSKIVVEKAITGREIE. Mg(2+)-binding residues include aspartate 305, glutamate 319, and asparagine 321.

Belongs to the D-alanine--D-alanine ligase family. The cofactor is Mg(2+). It depends on Mn(2+) as a cofactor.

It localises to the cytoplasm. The enzyme catalyses 2 D-alanine + ATP = D-alanyl-D-alanine + ADP + phosphate + H(+). It participates in cell wall biogenesis; peptidoglycan biosynthesis. Its function is as follows. Cell wall formation. This Pelodictyon phaeoclathratiforme (strain DSM 5477 / BU-1) protein is D-alanine--D-alanine ligase.